Reading from the N-terminus, the 236-residue chain is Purine nucleoside phosphorylase DeoD-type (236 aa).

Residue H5 coordinates a purine D-ribonucleoside. Phosphate contacts are provided by residues G21, R25, R44, and 88 to 91 (RVGT). A purine D-ribonucleoside is bound by residues 180-182 (EME) and 204-205 (SD). The active-site Proton donor is the D205.

It belongs to the PNP/UDP phosphorylase family. In terms of assembly, homohexamer; trimer of homodimers.

The catalysed reaction is a purine D-ribonucleoside + phosphate = a purine nucleobase + alpha-D-ribose 1-phosphate. The enzyme catalyses a purine 2'-deoxy-D-ribonucleoside + phosphate = a purine nucleobase + 2-deoxy-alpha-D-ribose 1-phosphate. Functionally, catalyzes the reversible phosphorolytic breakdown of the N-glycosidic bond in the beta-(deoxy)ribonucleoside molecules, with the formation of the corresponding free purine bases and pentose-1-phosphate. The chain is Purine nucleoside phosphorylase DeoD-type from Shewanella frigidimarina (strain NCIMB 400).